The primary structure comprises 226 residues: Ribonuclease 3 (226 aa).

In terms of domain architecture, RNase III spans 6–128 (INRLQRKLGY…LIGGVFLDSD (123 aa)). Residue E41 participates in Mg(2+) binding. D45 is a catalytic residue. The Mg(2+) site is built by D114 and E117. Residue E117 is part of the active site. Positions 155–225 (DPKTRLQEYL…AEQALKKLEL (71 aa)) constitute a DRBM domain.

Belongs to the ribonuclease III family. Homodimer. The cofactor is Mg(2+).

It is found in the cytoplasm. It catalyses the reaction Endonucleolytic cleavage to 5'-phosphomonoester.. Its function is as follows. Digests double-stranded RNA. Involved in the processing of primary rRNA transcript to yield the immediate precursors to the large and small rRNAs (23S and 16S). Processes some mRNAs, and tRNAs when they are encoded in the rRNA operon. Processes pre-crRNA and tracrRNA of type II CRISPR loci if present in the organism. The sequence is that of Ribonuclease 3 from Escherichia coli O139:H28 (strain E24377A / ETEC).